Here is a 309-residue protein sequence, read N- to C-terminus: Dihydroorotate dehydrogenase B (NAD(+)), catalytic subunit (309 aa).

FMN-binding positions include Ser-21 and 45–46; that span reads KA. Residues Lys-45 and 69–73 contribute to the substrate site; that span reads NAIGL. Asn-99 and Asn-127 together coordinate FMN. Asn-127 lines the substrate pocket. Catalysis depends on Cys-130, which acts as the Nucleophile. Residues Lys-165 and Ile-191 each contribute to the FMN site. 192-193 is a substrate binding site; it reads NT. FMN contacts are provided by residues Gly-217, 243–244, and 265–266; these read GG and GT.

Belongs to the dihydroorotate dehydrogenase family. Type 1 subfamily. In terms of assembly, heterotetramer of 2 PyrK and 2 PyrD type B subunits. FMN is required as a cofactor.

Its subcellular location is the cytoplasm. The enzyme catalyses (S)-dihydroorotate + NAD(+) = orotate + NADH + H(+). Its pathway is pyrimidine metabolism; UMP biosynthesis via de novo pathway; orotate from (S)-dihydroorotate (NAD(+) route): step 1/1. In terms of biological role, catalyzes the conversion of dihydroorotate to orotate with NAD(+) as electron acceptor. In Bacillus mycoides (strain KBAB4) (Bacillus weihenstephanensis), this protein is Dihydroorotate dehydrogenase B (NAD(+)), catalytic subunit (pyrD).